The chain runs to 307 residues: Acyl transferase (307 aa).

Active-site charge relay system residues include Ser-116, Asp-213, and His-243.

Belongs to the LuxD family.

Its pathway is lipid metabolism; fatty acid reduction for biolumincescence. Acyl transferase is part of the fatty acid reductase system required for aldehyde biosynthesis; it produces fatty acids for the luminescent reaction. This Aliivibrio fischeri (strain ATCC 700601 / ES114) (Vibrio fischeri) protein is Acyl transferase.